Reading from the N-terminus, the 215-residue chain is MSEAKRRAAEKAIEYVENDMIIGVGTGSTVAYFIDALGRTPKRIKGAVSSSEQSTAHLKQHGIEVLELNHTGTLPLYVDGADECDPYKRLIKGGGASLTREKIIAEASKQFICIIDPNKQVATLGKLPLPIEVIPMARSLVARQIMARTDGQPVWREGVITDNGNVILDVHHLRITDPVKLEQELNQIPGVVCVGLFARRCADLVIIGSEPPHIL.

Residues 26 to 29 (TGST), 79 to 82 (DGAD), and 92 to 95 (KGGG) each bind substrate. E101 acts as the Proton acceptor in catalysis. K119 serves as a coordination point for substrate.

It belongs to the ribose 5-phosphate isomerase family. In terms of assembly, homodimer.

It carries out the reaction aldehydo-D-ribose 5-phosphate = D-ribulose 5-phosphate. Its pathway is carbohydrate degradation; pentose phosphate pathway; D-ribose 5-phosphate from D-ribulose 5-phosphate (non-oxidative stage): step 1/1. Its function is as follows. Catalyzes the reversible conversion of ribose-5-phosphate to ribulose 5-phosphate. The polypeptide is Ribose-5-phosphate isomerase A (Xylella fastidiosa (strain 9a5c)).